A 356-amino-acid polypeptide reads, in one-letter code: Tyrosine recombinase XerS (356 aa).

The region spanning 16 to 121 (IMPSYVLEYY…ALSSLYKYLT (106 aa)) is the Core-binding (CB) domain. Residues 169–354 (GFLDYIDNEY…INEEQKNALD (186 aa)) form the Tyr recombinase domain. Residues Arg210, Lys234, His306, Arg309, and His332 contribute to the active site. Tyr341 (O-(3'-phospho-DNA)-tyrosine intermediate) is an active-site residue.

This sequence belongs to the 'phage' integrase family. XerS subfamily.

The protein resides in the cytoplasm. With respect to regulation, ftsK is required for recombination. Its function is as follows. Site-specific tyrosine recombinase, which acts by catalyzing the cutting and rejoining of the recombining DNA molecules. Essential to convert dimers of the bacterial chromosome into monomers to permit their segregation at cell division. The chain is Tyrosine recombinase XerS from Lactococcus lactis subsp. lactis (strain IL1403) (Streptococcus lactis).